We begin with the raw amino-acid sequence, 446 residues long: Eukaryotic translation initiation factor 3 subunit E (446 aa).

Residues 240 to 420 form the PCI domain; that stretch reads PLFNDENSRE…GTVVMNHPNS (181 aa).

Belongs to the eIF-3 subunit E family. In terms of assembly, component of the eukaryotic translation initiation factor 3 (eIF-3) complex.

The protein resides in the cytoplasm. Functionally, component of the eukaryotic translation initiation factor 3 (eIF-3) complex, which is involved in protein synthesis of a specialized repertoire of mRNAs and, together with other initiation factors, stimulates binding of mRNA and methionyl-tRNAi to the 40S ribosome. The eIF-3 complex specifically targets and initiates translation of a subset of mRNAs involved in cell proliferation. The sequence is that of Eukaryotic translation initiation factor 3 subunit E from Pyricularia oryzae (strain 70-15 / ATCC MYA-4617 / FGSC 8958) (Rice blast fungus).